Consider the following 430-residue polypeptide: Pre-mRNA-processing protein 45 (430 aa).

The segment covering 1–26 has biased composition (polar residues); sequence MSFRTLSSLLPSPQNSEVSESSAFSR. Disordered regions lie at residues 1–28, 280–299, and 370–430; these read MSFRTLSSLLPSPQNSEVSESSAFSRQS, MERNQRRRAERELERSNKMS, and PTTG…PHTS.

It belongs to the SNW family. As to quaternary structure, associated with the spliceosome.

It is found in the nucleus. Functionally, involved in pre-mRNA splicing. The polypeptide is Pre-mRNA-processing protein 45 (PRP45) (Kluyveromyces lactis (strain ATCC 8585 / CBS 2359 / DSM 70799 / NBRC 1267 / NRRL Y-1140 / WM37) (Yeast)).